Here is a 1439-residue protein sequence, read N- to C-terminus: Fanconi anemia group A protein homolog (1439 aa).

Residues 1 to 20 (MPGSPARGAAMGGGPRGLRK) form a disordered region. Residues 19 to 35 (RKTWTELLAGRVKKQKY) carry the Nuclear localization signal motif.

In terms of assembly, belongs to the multisubunit FA complex composed of FANCA, FANCB, FANCC, FANCE, FANCF, FANCG, FANCL/PHF9 and FANCM. In complex with FANCF, FANCG and FANCL, but not with FANCC, nor FANCE, interacts with HES1; this interaction may be essential for the stability and nuclear localization of FA core complex proteins. The complex with FANCC and FANCG may also include EIF2AK2 and HSP70. Interacts with FAAP20; interaction is direct. Phosphorylated primarily on serine residues. Phosphorylation is required for the formation of the nuclear complex. Mainly expressed in testis and lymphoid tissues like thymus, lymph nodes, and spleen, and at lower levels in kidney and ovary.

Its subcellular location is the nucleus. It localises to the cytoplasm. DNA repair protein that may operate in a postreplication repair or a cell cycle checkpoint function. May be involved in interstrand DNA cross-link repair and in the maintenance of normal chromosome stability. This is Fanconi anemia group A protein homolog (Fanca) from Mus musculus (Mouse).